A 194-amino-acid polypeptide reads, in one-letter code: RNA polymerase II subunit A C-terminal domain phosphatase SSU72 like protein 6 (194 aa).

It belongs to the SSU72 phosphatase family.

It localises to the nucleus. It catalyses the reaction O-phospho-L-seryl-[protein] + H2O = L-seryl-[protein] + phosphate. It carries out the reaction O-phospho-L-threonyl-[protein] + H2O = L-threonyl-[protein] + phosphate. Protein phosphatase that catalyzes the dephosphorylation of the C-terminal domain of RNA polymerase II. Plays a role in RNA processing and termination. This Homo sapiens (Human) protein is RNA polymerase II subunit A C-terminal domain phosphatase SSU72 like protein 6.